The following is a 278-amino-acid chain: Orotidine 5'-phosphate decarboxylase (278 aa).

The Proton donor role is filled by Lys-95.

Belongs to the OMP decarboxylase family. Type 2 subfamily.

The enzyme catalyses orotidine 5'-phosphate + H(+) = UMP + CO2. It functions in the pathway pyrimidine metabolism; UMP biosynthesis via de novo pathway; UMP from orotate: step 2/2. In Mycobacterium ulcerans (strain Agy99), this protein is Orotidine 5'-phosphate decarboxylase.